Reading from the N-terminus, the 342-residue chain is Holliday junction branch migration complex subunit RuvB (342 aa).

Positions 1–179 (MTNILSPEKI…FGIPMRLNFY (179 aa)) are large ATPase domain (RuvB-L). ATP-binding positions include I18, R19, G60, K63, T64, T65, 126–128 (EDF), R169, Y179, and R216. T64 contributes to the Mg(2+) binding site. The tract at residues 180–250 (NTEELKKVLN…ISDFGLNRLE (71 aa)) is small ATPAse domain (RuvB-S). The head domain (RuvB-H) stretch occupies residues 253 to 342 (HIGLDSNDYR…HQFNIFNENE (90 aa)). DNA-binding residues include R289, R308, and R313.

Belongs to the RuvB family. Homohexamer. Forms an RuvA(8)-RuvB(12)-Holliday junction (HJ) complex. HJ DNA is sandwiched between 2 RuvA tetramers; dsDNA enters through RuvA and exits via RuvB. An RuvB hexamer assembles on each DNA strand where it exits the tetramer. Each RuvB hexamer is contacted by two RuvA subunits (via domain III) on 2 adjacent RuvB subunits; this complex drives branch migration. In the full resolvosome a probable DNA-RuvA(4)-RuvB(12)-RuvC(2) complex forms which resolves the HJ.

Its subcellular location is the cytoplasm. It catalyses the reaction ATP + H2O = ADP + phosphate + H(+). The RuvA-RuvB-RuvC complex processes Holliday junction (HJ) DNA during genetic recombination and DNA repair, while the RuvA-RuvB complex plays an important role in the rescue of blocked DNA replication forks via replication fork reversal (RFR). RuvA specifically binds to HJ cruciform DNA, conferring on it an open structure. The RuvB hexamer acts as an ATP-dependent pump, pulling dsDNA into and through the RuvAB complex. RuvB forms 2 homohexamers on either side of HJ DNA bound by 1 or 2 RuvA tetramers; 4 subunits per hexamer contact DNA at a time. Coordinated motions by a converter formed by DNA-disengaged RuvB subunits stimulates ATP hydrolysis and nucleotide exchange. Immobilization of the converter enables RuvB to convert the ATP-contained energy into a lever motion, pulling 2 nucleotides of DNA out of the RuvA tetramer per ATP hydrolyzed, thus driving DNA branch migration. The RuvB motors rotate together with the DNA substrate, which together with the progressing nucleotide cycle form the mechanistic basis for DNA recombination by continuous HJ branch migration. Branch migration allows RuvC to scan DNA until it finds its consensus sequence, where it cleaves and resolves cruciform DNA. This Rickettsia felis (strain ATCC VR-1525 / URRWXCal2) (Rickettsia azadi) protein is Holliday junction branch migration complex subunit RuvB.